The chain runs to 394 residues: DDFKDLGFIDKQKAHVKEAVSKLTARSDSSLAGFVLDMFCTSMIDVAKELGVPYYIFFTSGAAFLGFLFYVQLIHDEQDADLTQFKDSDAELSVPSLANSLPARVLPASMLVKDRFYAFIRIIRGLREAKGIMVNTFMELESHALNSLKDDQSKIPPIYPVGPILKLSNQENDVGPEGSEIIEWLDDQPPSSVVFLCFGSMGGFDMDQAKEIACALEQSRHRFLWSLRRPPPKGKIETSTDYENLQEILPVGFSERTAGMGKVVGWAPQVAILEHPAIGGFVSHCGWNSILESIWFSVPIATWPLYAEQQFNAFTMVTELGLAVEIKMDYKKESEIILSADDIERGIKCVMEHHSEIRKRVKEMSDKSRKALMDDESSSFWLDRLIEDVINNLS.

The active-site Charge relay is Asp37. Thr59, Ala267, Gln269, His284, Trp287, Asn288, Ser289, and Glu292 together coordinate UDP-alpha-D-glucose. Ala307 lines the an anthocyanidin pocket. UDP-alpha-D-glucose-binding residues include Glu308 and Gln309.

It belongs to the UDP-glycosyltransferase family. In terms of tissue distribution, expressed in cotyledons and leaves.

It catalyses the reaction an anthocyanidin + UDP-alpha-D-glucose + H(+) = an anthocyanidin 3-O-beta-D-glucoside + UDP. It functions in the pathway pigment biosynthesis; anthocyanin biosynthesis. In the presence of other necessary color factors, this glycosylation reaction allows the accumulation of anthocyanin pigments. May be involved in glycosylation of unstable cyanohydrins to produce stable cyanoglucosides. This chain is Anthocyanidin 3-O-glucosyltransferase 6 (GT6), found in Manihot esculenta (Cassava).